Here is a 1110-residue protein sequence, read N- to C-terminus: Serine/threonine-protein kinase PknK (1110 aa).

The Protein kinase domain maps to 26–283; it reads FDNVEEIGRG…TAADVGEELR (258 aa). Residues 32–40 and lysine 55 contribute to the ATP site; that span reads IGRGGFGVV. Catalysis depends on arginine 148, which acts as the Proton acceptor. Positions 154 and 167 each coordinate Mg(2+). The segment at 308–343 is disordered; that stretch reads RSPEAHAAHRHTGGGTPTVPTPPTPATKYRPSVPTG.

Belongs to the protein kinase superfamily. Ser/Thr protein kinase family.

It carries out the reaction L-seryl-[protein] + ATP = O-phospho-L-seryl-[protein] + ADP + H(+). The enzyme catalyses L-threonyl-[protein] + ATP = O-phospho-L-threonyl-[protein] + ADP + H(+). This is Serine/threonine-protein kinase PknK (pknK) from Mycobacterium bovis (strain ATCC BAA-935 / AF2122/97).